A 346-amino-acid polypeptide reads, in one-letter code: Annexin A1 (346 aa).

Position 2 is an N-acetylalanine (Ala2). Ser5 bears the Phosphoserine; by TRPM7 mark. Gln19 is covalently cross-linked (Isoglutamyl lysine isopeptide (Gln-Lys) (interchain with K-?)). Tyr21 bears the Phosphotyrosine; by EGFR mark. The interval 25-47 (VKGSKGGPGSAVSPYPTFNPSSD) is disordered. Residues Ser34 and Ser37 each carry the phosphoserine modification. Position 41 is a phosphothreonine (Thr41). Annexin repeat units follow at residues 42 to 113 (FNPS…ALLK), 114 to 185 (TPAQ…SLAK), 197 to 269 (DLAD…VVVK), and 273 to 344 (SKPM…ALCG). Lys58 carries the N6-acetyllysine modification. 11 residues coordinate Ca(2+): Gly59, Val60, Glu62, Lys97, Leu100, Glu105, Met127, Gly129, Gly131, Thr132, and Glu134. At Thr136 the chain carries Phosphothreonine. Residues Asp171, Gly210, and Arg213 each contribute to the Ca(2+) site. Residue Lys214 forms a Glycyl lysine isopeptide (Lys-Gly) (interchain with G-Cter in SUMO1); alternate linkage. Residue Lys214 forms a Glycyl lysine isopeptide (Lys-Gly) (interchain with G-Cter in SUMO2); alternate linkage. Gly215 lines the Ca(2+) pocket. Lys239 carries the N6-acetyllysine modification. 3 residues coordinate Ca(2+): Asp253, Glu255, and Leu256. A Glycyl lysine isopeptide (Lys-Gly) (interchain with G-Cter in SUMO1) cross-link involves residue Lys257. Residues Glu261, Met286, Gly288, and Gly290 each coordinate Ca(2+). Lys312 carries the post-translational modification N6-acetyllysine. A disulfide bridge connects residues Cys324 and Cys343. Leu328, Glu330, and Thr331 together coordinate Ca(2+). Residue Lys332 forms a Glycyl lysine isopeptide (Lys-Gly) (interchain with G-Cter in SUMO1) linkage. Glu336 serves as a coordination point for Ca(2+).

This sequence belongs to the annexin family. As to quaternary structure, homodimer; non-covalently linked. Homodimer; linked by transglutamylation. Homodimers linked by transglutamylation are observed in placenta, but not in other tissues. Interacts with S100A11. Heterotetramer, formed by two molecules each of S100A11 and ANXA1. Interacts with DYSF. Interacts with EGFR. Phosphorylated by EGFR. Phosphorylated by protein kinase C and TRPM7. Phosphorylated in response to EGF treatment. In terms of processing, sumoylated. Post-translationally, proteolytically cleaved by cathepsin CTSG to release the active N-terminal peptide Ac2-26. In terms of tissue distribution, detected in lung and spleen (at protein level).

The protein resides in the nucleus. It is found in the cytoplasm. The protein localises to the cell projection. It localises to the cilium. Its subcellular location is the basolateral cell membrane. The protein resides in the lateral cell membrane. It is found in the early endosome. The protein localises to the cell membrane. It localises to the cytoplasmic vesicle membrane. Its subcellular location is the apical cell membrane. The protein resides in the membrane. It is found in the endosome. The protein localises to the secreted. It localises to the extracellular space. Its subcellular location is the extracellular exosome. The protein resides in the cytoplasmic vesicle. It is found in the secretory vesicle lumen. The protein localises to the phagocytic cup. Its function is as follows. Plays important roles in the innate immune response as effector of glucocorticoid-mediated responses and regulator of the inflammatory process. Has anti-inflammatory activity. Plays a role in glucocorticoid-mediated down-regulation of the early phase of the inflammatory response. Contributes to the adaptive immune response by enhancing signaling cascades that are triggered by T-cell activation, regulates differentiation and proliferation of activated T-cells. Promotes the differentiation of T-cells into Th1 cells and negatively regulates differentiation into Th2 cells. Has no effect on unstimulated T-cells. Negatively regulates hormone exocytosis via activation of the formyl peptide receptors and reorganization of the actin cytoskeleton. Has high affinity for Ca(2+) and can bind up to eight Ca(2+) ions. Displays Ca(2+)-dependent binding to phospholipid membranes. Plays a role in the formation of phagocytic cups and phagosomes. Plays a role in phagocytosis by mediating the Ca(2+)-dependent interaction between phagosomes and the actin cytoskeleton. In terms of biological role, functions at least in part by activating the formyl peptide receptors and downstream signaling cascades. Promotes chemotaxis of granulocytes and monocytes via activation of the formyl peptide receptors. Promotes rearrangement of the actin cytoskeleton, cell polarization and cell migration. Promotes resolution of inflammation and wound healing. Acts via neutrophil N-formyl peptide receptors to enhance the release of CXCL2. This Sus scrofa (Pig) protein is Annexin A1 (ANXA1).